A 332-amino-acid chain; its full sequence is Holliday junction branch migration complex subunit RuvB (332 aa).

The tract at residues 1-181 is large ATPase domain (RuvB-L); the sequence is MTRFLDSDAM…FGITGHMEYY (181 aa). ATP contacts are provided by residues Leu20, Arg21, Gly62, Lys65, Thr66, Thr67, 128 to 130, Arg171, Tyr181, and Arg218; that span reads EDF. Thr66 contributes to the Mg(2+) binding site. The interval 182 to 252 is small ATPAse domain (RuvB-S); sequence EENDLTEIIE…ITDKALTMLD (71 aa). The tract at residues 255-332 is head domain (RuvB-H); sequence HEGLDYVDQK…EHLGYQRFDK (78 aa). Residues Arg291, Arg310, Arg312, and Arg315 each contribute to the DNA site.

It belongs to the RuvB family. Homohexamer. Forms an RuvA(8)-RuvB(12)-Holliday junction (HJ) complex. HJ DNA is sandwiched between 2 RuvA tetramers; dsDNA enters through RuvA and exits via RuvB. An RuvB hexamer assembles on each DNA strand where it exits the tetramer. Each RuvB hexamer is contacted by two RuvA subunits (via domain III) on 2 adjacent RuvB subunits; this complex drives branch migration. In the full resolvosome a probable DNA-RuvA(4)-RuvB(12)-RuvC(2) complex forms which resolves the HJ.

It is found in the cytoplasm. The catalysed reaction is ATP + H2O = ADP + phosphate + H(+). In terms of biological role, the RuvA-RuvB-RuvC complex processes Holliday junction (HJ) DNA during genetic recombination and DNA repair, while the RuvA-RuvB complex plays an important role in the rescue of blocked DNA replication forks via replication fork reversal (RFR). RuvA specifically binds to HJ cruciform DNA, conferring on it an open structure. The RuvB hexamer acts as an ATP-dependent pump, pulling dsDNA into and through the RuvAB complex. RuvB forms 2 homohexamers on either side of HJ DNA bound by 1 or 2 RuvA tetramers; 4 subunits per hexamer contact DNA at a time. Coordinated motions by a converter formed by DNA-disengaged RuvB subunits stimulates ATP hydrolysis and nucleotide exchange. Immobilization of the converter enables RuvB to convert the ATP-contained energy into a lever motion, pulling 2 nucleotides of DNA out of the RuvA tetramer per ATP hydrolyzed, thus driving DNA branch migration. The RuvB motors rotate together with the DNA substrate, which together with the progressing nucleotide cycle form the mechanistic basis for DNA recombination by continuous HJ branch migration. Branch migration allows RuvC to scan DNA until it finds its consensus sequence, where it cleaves and resolves cruciform DNA. This chain is Holliday junction branch migration complex subunit RuvB, found in Streptococcus agalactiae serotype V (strain ATCC BAA-611 / 2603 V/R).